The primary structure comprises 158 residues: Biotin carboxyl carrier protein of acetyl-CoA carboxylase (158 aa).

The Biotinyl-binding domain maps to 81 to 157 (YATIVSPMVG…DCGQALMKVE (77 aa)). An N6-biotinyllysine modification is found at Lys123.

It localises to the plastid. The protein localises to the chloroplast. The protein operates within lipid metabolism; fatty acid biosynthesis. Its function is as follows. This protein is a component of the acetyl coenzyme A carboxylase complex; first, biotin carboxylase catalyzes the carboxylation of the carrier protein and then the transcarboxylase transfers the carboxyl group to form malonyl-CoA. The sequence is that of Biotin carboxyl carrier protein of acetyl-CoA carboxylase (accB) from Pyropia yezoensis (Susabi-nori).